The chain runs to 183 residues: SAGA-associated factor 11 homolog (183 aa).

An SGF11-type zinc finger spans residues 98 to 119 (CSCPNCNRIVAASRFAPHLEKC). The disordered stretch occupies residues 140 to 167 (GGNYFGADEDDEDDADWSGEKRKKKIAP). The span at 146–156 (ADEDDEDDADW) shows a compositional bias: acidic residues.

It belongs to the SGF11 family. As to quaternary structure, component of some SAGA transcription coactivator-HAT complexes. Within the SAGA complex, participates in a subcomplex of SAGA called the DUB module (deubiquitination module).

The protein resides in the nucleus. Its function is as follows. Component of the transcription regulatory histone acetylation (HAT) complex SAGA, a multiprotein complex that activates transcription by remodeling chromatin and mediating histone acetylation and deubiquitination. Within the SAGA complex, participates in a subcomplex that specifically deubiquitinates histone H2B. The SAGA complex is recruited to specific gene promoters by activators, where it is required for transcription. The polypeptide is SAGA-associated factor 11 homolog (Culex quinquefasciatus (Southern house mosquito)).